The chain runs to 252 residues: Phosphoribosylformylglycinamidine synthase subunit PurQ (252 aa).

The Glutamine amidotransferase type-1 domain maps to 6–237 (VGVVVFPGSN…FAHLAGTKRS (232 aa)). Catalysis depends on cysteine 89, which acts as the Nucleophile. Residues histidine 206 and glutamate 208 contribute to the active site.

As to quaternary structure, part of the FGAM synthase complex composed of 1 PurL, 1 PurQ and 2 PurS subunits.

It is found in the cytoplasm. It carries out the reaction N(2)-formyl-N(1)-(5-phospho-beta-D-ribosyl)glycinamide + L-glutamine + ATP + H2O = 2-formamido-N(1)-(5-O-phospho-beta-D-ribosyl)acetamidine + L-glutamate + ADP + phosphate + H(+). The catalysed reaction is L-glutamine + H2O = L-glutamate + NH4(+). The protein operates within purine metabolism; IMP biosynthesis via de novo pathway; 5-amino-1-(5-phospho-D-ribosyl)imidazole from N(2)-formyl-N(1)-(5-phospho-D-ribosyl)glycinamide: step 1/2. Functionally, part of the phosphoribosylformylglycinamidine synthase complex involved in the purines biosynthetic pathway. Catalyzes the ATP-dependent conversion of formylglycinamide ribonucleotide (FGAR) and glutamine to yield formylglycinamidine ribonucleotide (FGAM) and glutamate. The FGAM synthase complex is composed of three subunits. PurQ produces an ammonia molecule by converting glutamine to glutamate. PurL transfers the ammonia molecule to FGAR to form FGAM in an ATP-dependent manner. PurS interacts with PurQ and PurL and is thought to assist in the transfer of the ammonia molecule from PurQ to PurL. This is Phosphoribosylformylglycinamidine synthase subunit PurQ from Chlorobaculum parvum (strain DSM 263 / NCIMB 8327) (Chlorobium vibrioforme subsp. thiosulfatophilum).